The primary structure comprises 309 residues: Ribonuclease Z (309 aa).

The Zn(2+) site is built by His-63, His-65, Asp-67, His-68, His-145, Asp-216, and His-274. Asp-67 acts as the Proton acceptor in catalysis.

It belongs to the RNase Z family. As to quaternary structure, homodimer. Zn(2+) is required as a cofactor.

The catalysed reaction is Endonucleolytic cleavage of RNA, removing extra 3' nucleotides from tRNA precursor, generating 3' termini of tRNAs. A 3'-hydroxy group is left at the tRNA terminus and a 5'-phosphoryl group is left at the trailer molecule.. Functionally, zinc phosphodiesterase, which displays some tRNA 3'-processing endonuclease activity. Probably involved in tRNA maturation, by removing a 3'-trailer from precursor tRNA. In Streptococcus mutans serotype c (strain ATCC 700610 / UA159), this protein is Ribonuclease Z.